Here is a 285-residue protein sequence, read N- to C-terminus: ATP phosphoribosyltransferase (285 aa).

Belongs to the ATP phosphoribosyltransferase family. Long subfamily. Mg(2+) is required as a cofactor.

It is found in the cytoplasm. The enzyme catalyses 1-(5-phospho-beta-D-ribosyl)-ATP + diphosphate = 5-phospho-alpha-D-ribose 1-diphosphate + ATP. Its pathway is amino-acid biosynthesis; L-histidine biosynthesis; L-histidine from 5-phospho-alpha-D-ribose 1-diphosphate: step 1/9. With respect to regulation, feedback inhibited by histidine. Functionally, catalyzes the condensation of ATP and 5-phosphoribose 1-diphosphate to form N'-(5'-phosphoribosyl)-ATP (PR-ATP). Has a crucial role in the pathway because the rate of histidine biosynthesis seems to be controlled primarily by regulation of HisG enzymatic activity. This chain is ATP phosphoribosyltransferase, found in Sulfurisphaera tokodaii (strain DSM 16993 / JCM 10545 / NBRC 100140 / 7) (Sulfolobus tokodaii).